We begin with the raw amino-acid sequence, 604 residues long: Putative sodium-dependent multivitamin transporter (604 aa).

6 helical membrane-spanning segments follow: residues 4–24, 48–68, 78–98, 134–154, 160–180, and 188–208; these read LGAWDYTILAVVLIISVAIGI, VAPVAFSLMASFMSAVTILGV, MFVVINLSYVLSTPVAAYLII, VLYMGIVVYAPALALEAVTGL, IVIVGVVCTFYATLGGMKAVL, and LLMFAAVFSVIICAWVKAGSL. Residues N222 and N225 are each glycosylated (N-linked (GlcNAc...) asparagine). The next 7 helical transmembrane spans lie at 234–254, 273–293, 331–351, 389–409, 413–433, 440–460, and 511–531; these read HTWFTQILGGCATYLAIYGVN, ALWWCLPILCLLSLSTCFSGL, LAGLFVSGIFCASLSTISSII, LFFGALCIGMAFMAGSIGGLL, LSIFGIIGGPLLGLFTLGMYV, GAIGGLLISLAFCFWIGFGQP, and ALGFLITFFGGWLLSWLFALL.

It belongs to the sodium:solute symporter (SSF) (TC 2.A.21) family.

It is found in the cell membrane. The polypeptide is Putative sodium-dependent multivitamin transporter (Drosophila melanogaster (Fruit fly)).